The following is a 447-amino-acid chain: Ribosomal protein uS12 methylthiotransferase RimO (447 aa).

In terms of domain architecture, MTTase N-terminal spans 4–114 (PKVGFVSLGC…VMEAVHEYVP (111 aa)). [4Fe-4S] cluster is bound by residues cysteine 13, cysteine 49, cysteine 78, cysteine 147, cysteine 151, and cysteine 154. Residues 133–370 (LTPKHYAYLK…MQVQQQISAA (238 aa)) enclose the Radical SAM core domain. The region spanning 373 to 443 (QKRIGQTMTV…EYDLFAKLIK (71 aa)) is the TRAM domain.

The protein belongs to the methylthiotransferase family. RimO subfamily. [4Fe-4S] cluster serves as cofactor.

It localises to the cytoplasm. It catalyses the reaction L-aspartate(89)-[ribosomal protein uS12]-hydrogen + (sulfur carrier)-SH + AH2 + 2 S-adenosyl-L-methionine = 3-methylsulfanyl-L-aspartate(89)-[ribosomal protein uS12]-hydrogen + (sulfur carrier)-H + 5'-deoxyadenosine + L-methionine + A + S-adenosyl-L-homocysteine + 2 H(+). Functionally, catalyzes the methylthiolation of an aspartic acid residue of ribosomal protein uS12. The sequence is that of Ribosomal protein uS12 methylthiotransferase RimO from Acinetobacter baumannii (strain SDF).